The primary structure comprises 472 residues: 4-aminobutyrate aminotransferase (472 aa).

135–136 (GA) contributes to the pyridoxal 5'-phosphate binding site. Arg193 serves as a coordination point for substrate. Lys327 carries the N6-(pyridoxal phosphate)lysine modification. Thr352 serves as a coordination point for pyridoxal 5'-phosphate.

This sequence belongs to the class-III pyridoxal-phosphate-dependent aminotransferase family. Homodimer and homotetramer. Pyridoxal 5'-phosphate serves as cofactor.

It localises to the cytoplasm. It catalyses the reaction 4-aminobutanoate + 2-oxoglutarate = succinate semialdehyde + L-glutamate. The protein operates within amino-acid degradation; L-arginine degradation. Required for the degradation of gamma-aminobutyric acid (GABA), which is important for utilization of GABA as nitrogen source and for oxidative stress tolerance. Deaminates GABA to succinate semialdehyde, which in turn is converted to succinate by the succinate-semialdehyde dehydrogenase UGA2. May be involved in an alternative, arginase-independent arginine degradation pathway via GABA. The chain is 4-aminobutyrate aminotransferase from Kluyveromyces lactis (strain ATCC 8585 / CBS 2359 / DSM 70799 / NBRC 1267 / NRRL Y-1140 / WM37) (Yeast).